The sequence spans 146 residues: Flagellar assembly factor FliW 1 (146 aa).

It belongs to the FliW family. As to quaternary structure, interacts with translational regulator CsrA and flagellin(s).

The protein resides in the cytoplasm. In terms of biological role, acts as an anti-CsrA protein, binds CsrA and prevents it from repressing translation of its target genes, one of which is flagellin. Binds to flagellin and participates in the assembly of the flagellum. The protein is Flagellar assembly factor FliW 1 of Helicobacter hepaticus (strain ATCC 51449 / 3B1).